Here is a 205-residue protein sequence, read N- to C-terminus: Type-4 uracil-DNA glycosylase (205 aa).

[4Fe-4S] cluster contacts are provided by cysteine 13 and cysteine 16. Uracil contacts are provided by residues 40 to 42 (GEG), phenylalanine 54, and asparagine 80. Residues cysteine 84 and cysteine 100 each coordinate [4Fe-4S] cluster. Histidine 155 is a uracil binding site.

Belongs to the uracil-DNA glycosylase (UDG) superfamily. Type 4 (UDGa) family. As to quaternary structure, monomer.

The catalysed reaction is Hydrolyzes single-stranded DNA or mismatched double-stranded DNA and polynucleotides, releasing free uracil.. With respect to regulation, product-inhibited by apurinic/apyrimidinic sites. Removes uracil bases that are present in DNA as a result of either deamination of cytosine or misincorporation of dUMP instead of dTMP. Can remove uracil from double-stranded DNA containing either a U/G, U/A, U/C or U/T base pair as well as from single-stranded DNA. Specifically recognizes uracil that is flipped out from double-stranded DNA. The chain is Type-4 uracil-DNA glycosylase from Thermus thermophilus (strain ATCC 27634 / DSM 579 / HB8).